Reading from the N-terminus, the 309-residue chain is Type II methyltransferase M.HindIII (309 aa).

Belongs to the N(4)/N(6)-methyltransferase family.

The catalysed reaction is a 2'-deoxyadenosine in DNA + S-adenosyl-L-methionine = an N(6)-methyl-2'-deoxyadenosine in DNA + S-adenosyl-L-homocysteine + H(+). Functionally, a beta subtype methylase that recognizes the double-stranded sequence 5'-AAGCTT-3', methylates A-1 on both strands, and protects the DNA from cleavage by the HindIII endonuclease. The sequence is that of Type II methyltransferase M.HindIII from Haemophilus influenzae (strain ATCC 51907 / DSM 11121 / KW20 / Rd).